We begin with the raw amino-acid sequence, 126 residues long: Small ribosomal subunit protein uS13 (126 aa).

The segment at 93 to 126 (RRGLPVRGQRTKTNARTRKGPKRTVAGKKKAGRK) is disordered.

Belongs to the universal ribosomal protein uS13 family. In terms of assembly, part of the 30S ribosomal subunit. Forms a loose heterodimer with protein S19. Forms two bridges to the 50S subunit in the 70S ribosome.

In terms of biological role, located at the top of the head of the 30S subunit, it contacts several helices of the 16S rRNA. In the 70S ribosome it contacts the 23S rRNA (bridge B1a) and protein L5 of the 50S subunit (bridge B1b), connecting the 2 subunits; these bridges are implicated in subunit movement. Contacts the tRNAs in the A and P-sites. The polypeptide is Small ribosomal subunit protein uS13 (Beutenbergia cavernae (strain ATCC BAA-8 / DSM 12333 / CCUG 43141 / JCM 11478 / NBRC 16432 / NCIMB 13614 / HKI 0122)).